A 534-amino-acid chain; its full sequence is MSGNNNNPQKPQGSAPLPFGNPGMASASVPGNQGFAQSHMAANFQAQFQFSQAQALAHAQAQSKVQAQLQAQLQAQGMTMNQAQGSPGIGGLGPSSPSLTTPGSLNMKRFQQKPPMRPPGAPASNNTISPMRTMELTPAARKKKQKLPEKSLQERVAAILPESALYTQLLEFESRVDAALTRKKVDIQEALKNPPCIQKTLRIYVFNSFANQNNTIPGNPNADPPTWTLKIIGRILEDGVDPDQPGFVQKANPLHPKFSSFFKRVTVSLDQRLYPENPLIIWENARSPAPQEGFEIKRKGNQEFAASIRLEMNYVPEKFKLSTALMDVLGIEVETRPRIIAAIWHYVKARKLQNPNDPSFFNCDAALQKVFGEEKLKFTMVSQKISHHLSPPPPIHLEHKIKLSGNNPAVSACYDVLVDVPFPIQRDLNNLLANAEKNKEIEACDEAICAAIRKIHEHRRRRAFFLGFSQSPVEFINALIESQSKDLKVVAGEASRNAERERRSDFFNQPWVEDAVIRYLNRRPAAGNDGPGSW.

Polar residues predominate over residues 1–12; it reads MSGNNNNPQKPQ. 2 disordered regions span residues 1 to 33 and 78 to 132; these read MSGN…PGNQ and MTMN…SPMR. Over residues 94–105 the composition is skewed to low complexity; the sequence is PSSPSLTTPGSL. One can recognise an SWIB/MDM2 domain in the interval 314-391; the sequence is YVPEKFKLST…SQKISHHLSP (78 aa).

It belongs to the SMARCD family. As to quaternary structure, part of a SWI-SNF complex.

The protein resides in the nucleus. Involved in transcriptional activation and repression of select genes by chromatin remodeling (alteration of DNA-nucleosome topology). The chain is SWI/SNF complex component SNF12 homolog from Arabidopsis thaliana (Mouse-ear cress).